A 489-amino-acid chain; its full sequence is Lysine--tRNA ligase (489 aa).

Residues glutamate 399 and glutamate 406 each contribute to the Mg(2+) site.

The protein belongs to the class-II aminoacyl-tRNA synthetase family. Homodimer. Mg(2+) serves as cofactor.

It is found in the cytoplasm. It carries out the reaction tRNA(Lys) + L-lysine + ATP = L-lysyl-tRNA(Lys) + AMP + diphosphate. This Mycoplasma pneumoniae (strain ATCC 29342 / M129 / Subtype 1) (Mycoplasmoides pneumoniae) protein is Lysine--tRNA ligase (lysS).